We begin with the raw amino-acid sequence, 162 residues long: NADH-quinone oxidoreductase subunit I (162 aa).

4Fe-4S ferredoxin-type domains follow at residues 54-83 and 93-122; these read RRYE…IESE and TRYD…ETQI. Residues C63, C66, C69, C73, C102, C105, C108, and C112 each coordinate [4Fe-4S] cluster.

This sequence belongs to the complex I 23 kDa subunit family. NDH-1 is composed of 14 different subunits. Subunits NuoA, H, J, K, L, M, N constitute the membrane sector of the complex. Requires [4Fe-4S] cluster as cofactor.

The protein localises to the cell inner membrane. It carries out the reaction a quinone + NADH + 5 H(+)(in) = a quinol + NAD(+) + 4 H(+)(out). Functionally, NDH-1 shuttles electrons from NADH, via FMN and iron-sulfur (Fe-S) centers, to quinones in the respiratory chain. The immediate electron acceptor for the enzyme in this species is believed to be ubiquinone. Couples the redox reaction to proton translocation (for every two electrons transferred, four hydrogen ions are translocated across the cytoplasmic membrane), and thus conserves the redox energy in a proton gradient. The chain is NADH-quinone oxidoreductase subunit I from Burkholderia thailandensis (strain ATCC 700388 / DSM 13276 / CCUG 48851 / CIP 106301 / E264).